Reading from the N-terminus, the 526-residue chain is MSRKSTYPKVMCTQHPDSASRYISTQEEPGEAIEAAVVFGCDEYMPDYEGKATPYHQNVQIVSRLIEETDLVPGKDVFITPRAPSAVQENRFRQLMVMMSIAEANHGALEYSDVQAINEFVHPMTGTVREILDAQQHMVDVSELAKKEFGFAMEVPRIIPLIEDAPALLHAKELTENTLLAWKERFGTVPEKFRVFLGKSDSALSFGHVASTLSCKYAINGLSELNFELETETGIVFGAGTLPFRGHLDLKNAENFFREYRGIGTITLQSALRYSHEKGDAEALVDLAKEKLPEIPELFSAEEKEELVNLIGIFGTRYSLIIRELASTINRLSDLLPQQRDRLMHRGSGGYSRSAPDISGIVSLCRTDIGKELLASMPAEDLHLPRAIKFTGALYSIGLPPEFIGTGAALNEAREKLGDEACERLLTKYFPSLVSDLNFATGYLDLNVASRFLSGACFKEVSKDIEILHETLGLETHPEPSYRILLEMMQPELLQAGTSGNCMDEEVSQLVCSTLTKMGKIRKALG.

This sequence belongs to the PEPCase type 2 family. As to quaternary structure, homotetramer. The cofactor is Mg(2+).

It carries out the reaction oxaloacetate + phosphate = phosphoenolpyruvate + hydrogencarbonate. Functionally, catalyzes the irreversible beta-carboxylation of phosphoenolpyruvate (PEP) to form oxaloacetate (OAA), a four-carbon dicarboxylic acid source for the tricarboxylic acid cycle. This is Phosphoenolpyruvate carboxylase from Methanosarcina acetivorans (strain ATCC 35395 / DSM 2834 / JCM 12185 / C2A).